A 417-amino-acid chain; its full sequence is NADH-quinone oxidoreductase subunit D (417 aa).

The protein belongs to the complex I 49 kDa subunit family. In terms of assembly, NDH-1 is composed of 14 different subunits. Subunits NuoB, C, D, E, F, and G constitute the peripheral sector of the complex.

It is found in the cell inner membrane. The enzyme catalyses a quinone + NADH + 5 H(+)(in) = a quinol + NAD(+) + 4 H(+)(out). In terms of biological role, NDH-1 shuttles electrons from NADH, via FMN and iron-sulfur (Fe-S) centers, to quinones in the respiratory chain. The immediate electron acceptor for the enzyme in this species is believed to be ubiquinone. Couples the redox reaction to proton translocation (for every two electrons transferred, four hydrogen ions are translocated across the cytoplasmic membrane), and thus conserves the redox energy in a proton gradient. This is NADH-quinone oxidoreductase subunit D from Acidovorax sp. (strain JS42).